The chain runs to 420 residues: Gamma-glutamyl phosphate reductase (420 aa).

Belongs to the gamma-glutamyl phosphate reductase family.

The protein localises to the cytoplasm. It carries out the reaction L-glutamate 5-semialdehyde + phosphate + NADP(+) = L-glutamyl 5-phosphate + NADPH + H(+). The protein operates within amino-acid biosynthesis; L-proline biosynthesis; L-glutamate 5-semialdehyde from L-glutamate: step 2/2. Catalyzes the NADPH-dependent reduction of L-glutamate 5-phosphate into L-glutamate 5-semialdehyde and phosphate. The product spontaneously undergoes cyclization to form 1-pyrroline-5-carboxylate. In Streptococcus pneumoniae (strain 70585), this protein is Gamma-glutamyl phosphate reductase.